A 324-amino-acid polypeptide reads, in one-letter code: Lactonase drp35 (324 aa).

Ca(2+) contacts are provided by glutamate 47, serine 109, glycine 111, aspartate 129, threonine 132, tyrosine 134, aspartate 137, asparagine 184, aspartate 235, and serine 236. The active-site Proton donor is aspartate 235.

It belongs to the SMP-30/CGR1 family. Ca(2+) is required as a cofactor.

It localises to the cytoplasm. In terms of biological role, exhibits lactonase activity. Acts in cells with perturbed membrane integrity and is possibly related to the membrane homeostasis. This is Lactonase drp35 (drp35) from Staphylococcus aureus (strain USA300).